A 420-amino-acid chain; its full sequence is Gamma-glutamyl phosphate reductase (420 aa).

It belongs to the gamma-glutamyl phosphate reductase family.

The protein localises to the cytoplasm. The catalysed reaction is L-glutamate 5-semialdehyde + phosphate + NADP(+) = L-glutamyl 5-phosphate + NADPH + H(+). Its pathway is amino-acid biosynthesis; L-proline biosynthesis; L-glutamate 5-semialdehyde from L-glutamate: step 2/2. In terms of biological role, catalyzes the NADPH-dependent reduction of L-glutamate 5-phosphate into L-glutamate 5-semialdehyde and phosphate. The product spontaneously undergoes cyclization to form 1-pyrroline-5-carboxylate. This chain is Gamma-glutamyl phosphate reductase, found in Streptococcus gordonii (strain Challis / ATCC 35105 / BCRC 15272 / CH1 / DL1 / V288).